The chain runs to 623 residues: Glutathione import ATP-binding protein GsiA (623 aa).

2 ABC transporter domains span residues 15-269 and 325-564; these read VSGL…QTLL and LRSG…RKLM. ATP-binding positions include 49–56 and 357–364; these read GESGSGKS.

This sequence belongs to the ABC transporter superfamily. Glutathione importer (TC 3.A.1.5.11) family. As to quaternary structure, the complex is composed of two ATP-binding proteins (GsiA), two transmembrane proteins (GsiC and GsiD) and a solute-binding protein (GsiB).

It localises to the cell inner membrane. It catalyses the reaction glutathione(out) + ATP + H2O = glutathione(in) + ADP + phosphate + H(+). In terms of biological role, part of the ABC transporter complex GsiABCD involved in glutathione import. Responsible for energy coupling to the transport system. This chain is Glutathione import ATP-binding protein GsiA, found in Salmonella paratyphi A (strain ATCC 9150 / SARB42).